The primary structure comprises 228 residues: Outer membrane protein assembly factor BamE (228 aa).

An N-terminal signal peptide occupies residues 1–29 (MNPILKGVYSPARLGVVALTLFGILGVTG). C30 is lipidated: N-palmitoyl cysteine. C30 carries S-diacylglycerol cysteine lipidation. Residues 197–228 (DFFGSSKKDPDPQSPQLGPGTLNDVPKPADSK) form a disordered region.

Belongs to the BamE family. Part of the Bam complex.

Its subcellular location is the cell outer membrane. Part of the outer membrane protein assembly complex, which is involved in assembly and insertion of beta-barrel proteins into the outer membrane. This Polynucleobacter necessarius subsp. necessarius (strain STIR1) protein is Outer membrane protein assembly factor BamE.